A 105-amino-acid polypeptide reads, in one-letter code: Met repressor (105 aa).

This sequence belongs to the MetJ family. As to quaternary structure, homodimer.

The protein localises to the cytoplasm. This regulatory protein, when combined with SAM (S-adenosylmethionine) represses the expression of the methionine regulon and of enzymes involved in SAM synthesis. The sequence is that of Met repressor from Serratia proteamaculans (strain 568).